The sequence spans 384 residues: MQIRFFATNRDRQNLGLNVDRDTRIKLLKFGYHWVDMKKYMAHYLATTDPSTMPPGVIIEDSEETVFNKFLKKEAVKHIIIGTHGYNVPFHGALTSFSILADTLKGALKKHNFTLIADPEEKIDIDNSNQNLIAFVGFSWPSNGKVLDYNSDRTECVQSAPALANLISYIRTKKPDIKIYVIAHSMGSYLVCHMLEQLVNQAFEPTELNEEIKNRLKRKDRGGENTFFVDRYFMLAPDVERREVTKCDLGGSEYTGPFYSGLEHLVQESHVFYSRYDNALKASVVEKDAIRESLQKGFELFTGPDLQKRWESSLGLNPLPALAPNNVYSHNATVLTNRQIDHGDYFDAPAIIDQIANIISEANTSRIPELPWRFSESSDRPLIE.

This is an uncharacterized protein from Nostoc sp. (strain PCC 7120 / SAG 25.82 / UTEX 2576).